A 217-amino-acid chain; its full sequence is Protein-L-isoaspartate O-methyltransferase (217 aa).

Residue Ser-64 is part of the active site.

The protein belongs to the methyltransferase superfamily. L-isoaspartyl/D-aspartyl protein methyltransferase family.

The protein resides in the cytoplasm. It carries out the reaction [protein]-L-isoaspartate + S-adenosyl-L-methionine = [protein]-L-isoaspartate alpha-methyl ester + S-adenosyl-L-homocysteine. Catalyzes the methyl esterification of L-isoaspartyl residues in peptides and proteins that result from spontaneous decomposition of normal L-aspartyl and L-asparaginyl residues. It plays a role in the repair and/or degradation of damaged proteins. In Rhodopseudomonas palustris (strain BisB5), this protein is Protein-L-isoaspartate O-methyltransferase.